A 447-amino-acid polypeptide reads, in one-letter code: Probable glycine dehydrogenase (decarboxylating) subunit 1 (447 aa).

This sequence belongs to the GcvP family. N-terminal subunit subfamily. As to quaternary structure, the glycine cleavage system is composed of four proteins: P, T, L and H. In this organism, the P 'protein' is a heterodimer of two subunits.

It catalyses the reaction N(6)-[(R)-lipoyl]-L-lysyl-[glycine-cleavage complex H protein] + glycine + H(+) = N(6)-[(R)-S(8)-aminomethyldihydrolipoyl]-L-lysyl-[glycine-cleavage complex H protein] + CO2. Its function is as follows. The glycine cleavage system catalyzes the degradation of glycine. The P protein binds the alpha-amino group of glycine through its pyridoxal phosphate cofactor; CO(2) is released and the remaining methylamine moiety is then transferred to the lipoamide cofactor of the H protein. This chain is Probable glycine dehydrogenase (decarboxylating) subunit 1, found in Metallosphaera sedula (strain ATCC 51363 / DSM 5348 / JCM 9185 / NBRC 15509 / TH2).